The sequence spans 244 residues: Large ribosomal subunit protein uL2 (244 aa).

A compositionally biased stretch (basic residues) spans 1–12 (MGKRILVQRRGR). 2 disordered regions span residues 1-26 (MGKR…KRDG) and 193-225 (AMSP…KVGF).

The protein belongs to the universal ribosomal protein uL2 family. In terms of assembly, part of the 50S ribosomal subunit. Forms a bridge to the 30S subunit in the 70S ribosome.

In terms of biological role, one of the primary rRNA binding proteins. Required for association of the 30S and 50S subunits to form the 70S ribosome, for tRNA binding and peptide bond formation. It has been suggested to have peptidyltransferase activity; this is somewhat controversial. Makes several contacts with the 16S rRNA in the 70S ribosome. The sequence is that of Large ribosomal subunit protein uL2 from Pyrobaculum calidifontis (strain DSM 21063 / JCM 11548 / VA1).